We begin with the raw amino-acid sequence, 422 residues long: Enolase (422 aa).

Position 162 (glutamine 162) interacts with (2R)-2-phosphoglycerate. Glutamate 204 (proton donor) is an active-site residue. Residues aspartate 241, glutamate 284, and aspartate 311 each contribute to the Mg(2+) site. 4 residues coordinate (2R)-2-phosphoglycerate: lysine 336, arginine 365, serine 366, and lysine 387. The Proton acceptor role is filled by lysine 336.

This sequence belongs to the enolase family. The cofactor is Mg(2+).

It localises to the cytoplasm. Its subcellular location is the secreted. The protein localises to the cell surface. The enzyme catalyses (2R)-2-phosphoglycerate = phosphoenolpyruvate + H2O. The protein operates within carbohydrate degradation; glycolysis; pyruvate from D-glyceraldehyde 3-phosphate: step 4/5. Catalyzes the reversible conversion of 2-phosphoglycerate (2-PG) into phosphoenolpyruvate (PEP). It is essential for the degradation of carbohydrates via glycolysis. In Thermus thermophilus (strain ATCC 27634 / DSM 579 / HB8), this protein is Enolase.